A 977-amino-acid chain; its full sequence is MMQQRSGSLSLLSNAVQAGQSSDPMQDDPAKTEPGTPKGYDGSKNSSPASVPSWIHEKTKAGKDRKRLPLACQSCRKKKVKCSGERPSCDQCLKHNIPCIYKSNSTKRSHSRHEEIHHQQQLHLNHQYQHQHKNVAANSIDNLSRQYSQPNHINTHDSVNSPPSYGIMASATNQPLSHPTIVPSSNSSSLLNSTNNISHNPQVSLMSASLSKNLVLDPASPKSVSPDLVYVSSDNPPVSTAASAYSSSLPISDVTRALPLAPASNSQHPSLSSQPVSVPSNTINIPTDSLSIVSNPSQTPAKFDSNRISQVPNSDYSIYSNFNNFPIANHAPSFPQSSVKKLDSSFSPTSLPTFTTNSASSGLSTSYTNNNDTTSDNNSLQAVPRLDPVPSLTLSSTPVAELPPLELRIHLAEVFFHCCHGQSYNLFHRPTFFESLNNNTVPLVVVYAVCAVSARFSSRMHDRFSPPYMAGEQYAREARRLALDNFDRPDLSLVAALLLLSLHDSGTCETGKSWMYGGMALRMAAALQLNCEQGSNPLDLDNIDSGPRISFLERELRRRTFWSCFLMDRYASSHEHLQFLDENDIGIQLPVHELLFTKQIAGVTQTLDGRILEGVPSIVIPADTTENMGVAAYTVKIIALWGRAVKYLKQDGKRRDPYPYWHRNSDFSHISEALYAWADGLPQRLKYSAVGLENHLSIQQGAQYAFLHLAYHHTLMWLFRSIGETENNQLSKISSSVSLAGNTVSFSPVSHTPINVTNGESQNNSNNDPSANGAARRLHKAAREICLRCANAISMIVDDCRKHNVILTSPFIASGVYTAFCVQAEAAFGSNVLAASTARHNLEIDLRLMLEMKNYWGSISALCDKMSEIWADWVQRTSSGIQEEDTIPNEMIDEERMLDLEKHFMYITESPIVPNQAAQKSYSPDLMSYFGFAKNSDLQQWNGLWPSDDLRNYQESTIDSLVAYATGNPGWNISFAG.

A compositionally biased stretch (polar residues) spans 1 to 24 (MMQQRSGSLSLLSNAVQAGQSSDP). The interval 1–65 (MMQQRSGSLS…HEKTKAGKDR (65 aa)) is disordered. The zn(2)-C6 fungal-type DNA-binding region spans 72-99 (CQSCRKKKVKCSGERPSCDQCLKHNIPC). The interval 176 to 195 (LSHPTIVPSSNSSSLLNSTN) is disordered. Residues 177 to 195 (SHPTIVPSSNSSSLLNSTN) show a composition bias toward low complexity. Phosphoserine is present on Ser-220. 3 disordered regions span residues 287–307 (TDSL…DSNR), 357–380 (NSAS…NNSL), and 751–774 (HTPI…ANGA). Low complexity predominate over residues 364-379 (STSYTNNNDTTSDNNS). Positions 751-770 (HTPINVTNGESQNNSNNDPS) are enriched in polar residues.

It is found in the cytoplasm. It localises to the nucleus. This is an uncharacterized protein from Schizosaccharomyces pombe (strain 972 / ATCC 24843) (Fission yeast).